The following is a 70-amino-acid chain: DNA-directed RNA polymerase subunit omega (70 aa).

It belongs to the RNA polymerase subunit omega family. The RNAP catalytic core consists of 2 alpha, 1 beta, 1 beta' and 1 omega subunit. When a sigma factor is associated with the core the holoenzyme is formed, which can initiate transcription.

It catalyses the reaction RNA(n) + a ribonucleoside 5'-triphosphate = RNA(n+1) + diphosphate. Its function is as follows. Promotes RNA polymerase assembly. Latches the N- and C-terminal regions of the beta' subunit thereby facilitating its interaction with the beta and alpha subunits. In Marinobacter nauticus (strain ATCC 700491 / DSM 11845 / VT8) (Marinobacter aquaeolei), this protein is DNA-directed RNA polymerase subunit omega.